An 84-amino-acid chain; its full sequence is Toxin CsE9 (84 aa).

Positions 1–19 are cleaved as a signal peptide; the sequence is MNSLLMITTCLILIGTVLA. Residues 20 to 83 enclose the LCN-type CS-alpha/beta domain; it reads EDGYLFDKRK…ISRTPGKTCK (64 aa). Disulfide bonds link Cys31/Cys82, Cys35/Cys58, Cys44/Cys63, and Cys48/Cys65.

This sequence belongs to the long (4 C-C) scorpion toxin superfamily. Sodium channel inhibitor family. Beta subfamily. In terms of tissue distribution, expressed by the venom gland.

The protein resides in the secreted. Beta toxins bind voltage-independently at site-4 of sodium channels (Nav) and shift the voltage of activation toward more negative potentials thereby affecting sodium channel activation and promoting spontaneous and repetitive firing. This Centruroides sculpturatus (Arizona bark scorpion) protein is Toxin CsE9.